Consider the following 352-residue polypeptide: MDYQVSSPTYDIDYYTSEPCQKVNVKQIAARLLPPLYSLVFIFGFVGNILVVLILINCKRLKSMTDIYLLNLAISDLFFLLTVPFWAHYAAAQWDFGNTMCQLLTGLYFIGFFSGIFFIILLTIDRYLAIVHAVFALKARTVTFGVVTSVITWVVAVFASLPGIIFTRSQREGLHYTCSSHFPYSQYQFWKNFQTLKIVILGLVLPLLVMVICYSGILKTLLRCRNEKKRHRAVRLIFTIMIVYFLFWAPYNIVLLLNTFQEFFGLNNCSSSNRLDQAMQVTETLGMTHCCINPIIYAFVGEKFRNYLLVFFQKHIAKRFCKCCYIFQQEAPERASSVYTRSTGEQEISVGL.

Residues 1-30 (MDYQVSSPTYDIDYYTSEPCQKVNVKQIAA) are Extracellular-facing. Tyr-3 is modified (sulfotyrosine). O-linked (GalNAc...) serine glycosylation is found at Ser-6 and Ser-7. Tyr-10, Tyr-14, and Tyr-15 each carry sulfotyrosine. 2 disulfides stabilise this stretch: Cys-20-Cys-269 and Cys-101-Cys-178. A helical transmembrane segment spans residues 31-58 (RLLPPLYSLVFIFGFVGNILVVLILINC). The Cytoplasmic portion of the chain corresponds to 59–68 (KRLKSMTDIY). Residues 69–89 (LLNLAISDLFFLLTVPFWAHY) form a helical membrane-spanning segment. Over 90–102 (AAAQWDFGNTMCQ) the chain is Extracellular. Residues 103–124 (LLTGLYFIGFFSGIFFIILLTI) form a helical membrane-spanning segment. The Cytoplasmic portion of the chain corresponds to 125 to 141 (DRYLAIVHAVFALKART). Residues 142-166 (VTFGVVTSVITWVVAVFASLPGIIF) form a helical membrane-spanning segment. Residues 167 to 198 (TRSQREGLHYTCSSHFPYSQYQFWKNFQTLKI) lie on the Extracellular side of the membrane. The helical transmembrane segment at 199–218 (VILGLVLPLLVMVICYSGIL) threads the bilayer. Topologically, residues 219–235 (KTLLRCRNEKKRHRAVR) are cytoplasmic. A helical membrane pass occupies residues 236–260 (LIFTIMIVYFLFWAPYNIVLLLNTF). Topologically, residues 261–277 (QEFFGLNNCSSSNRLDQ) are extracellular. Residues 278 to 301 (AMQVTETLGMTHCCINPIIYAFVG) form a helical membrane-spanning segment. Residues 302–352 (EKFRNYLLVFFQKHIAKRFCKCCYIFQQEAPERASSVYTRSTGEQEISVGL) are Cytoplasmic-facing. Residues Cys-321, Cys-323, and Cys-324 are each lipidated (S-palmitoyl cysteine). 4 positions are modified to phosphoserine; by BARK1: Ser-336, Ser-337, Ser-342, and Ser-349.

Belongs to the G-protein coupled receptor 1 family. In terms of assembly, interacts with PRAF2. Efficient ligand binding to CCL3/MIP-1alpha and CCL4/MIP-1beta requires sulfation, O-glycosylation and sialic acid modifications. Glycosylation on Ser-6 is required for efficient binding of CCL4. Interacts with GRK2. Interacts with ARRB1 and ARRB2. Interacts with CNIH4. Interacts with S100A4; this interaction stimulates T-lymphocyte chemotaxis. In terms of processing, sulfated on at least 2 of the N-terminal tyrosines. Sulfation is required for efficient binding of the chemokines, CCL3 and CCL4. Post-translationally, palmitoylation in the C-terminal is important for cell surface expression. Phosphorylation on serine residues in the C-terminal is stimulated by binding CC chemokines especially by APO-RANTES. In terms of processing, O-glycosylated, but not N-glycosylated. Ser-6 appears to be the major site even if Ser-7 may be also O-glycosylated. Also sialylated glycans present which contribute to chemokine binding. Thr-16 and Ser-17 may also be glycosylated and, if so, with small moieties such as a T-antigen.

The protein localises to the cell membrane. In terms of biological role, receptor for a number of inflammatory CC-chemokines including CCL3/MIP-1-alpha, CCL4/MIP-1-beta and RANTES and subsequently transduces a signal by increasing the intracellular calcium ion level. May play a role in the control of granulocytic lineage proliferation or differentiation. Participates in T-lymphocyte migration to the infection site by acting as a chemotactic receptor. The sequence is that of C-C chemokine receptor type 5 (CCR5) from Rhinopithecus bieti (Black snub-nosed monkey).